Consider the following 261-residue polypeptide: General secretion pathway protein N (261 aa).

The Cytoplasmic portion of the chain corresponds to 1 to 10 (MRLEMIGLRT). Residues 11-31 (WLLATVVGWALLVCVLAVAGL) form a helical membrane-spanning segment. Residues 32-261 (GKRVELLPDD…QGGSTPGQTQ (230 aa)) are Periplasmic-facing. Residues 158-261 (VFNGQGGQPP…QGGSTPGQTQ (104 aa)) form a disordered region. Residues 179-200 (AVPPLPPNVPPAPATPAPPPAE) are compositionally biased toward pro residues. Over residues 201–211 (VPQQQPGGQAP) the composition is skewed to low complexity. Over residues 227 to 244 (RPSDEQMRAIRERIEARR) the composition is skewed to basic and acidic residues.

As to quaternary structure, binds to XpsD.

Its subcellular location is the cell inner membrane. Involved in a general secretion pathway (GSP) for the export of proteins. In Xanthomonas campestris pv. campestris (strain ATCC 33913 / DSM 3586 / NCPPB 528 / LMG 568 / P 25), this protein is General secretion pathway protein N (xpsN).